Here is a 162-residue protein sequence, read N- to C-terminus: NADPH-dependent 7-cyano-7-deazaguanine reductase (162 aa).

Residue cysteine 53 is the Thioimide intermediate of the active site. The active-site Proton donor is the aspartate 60. Residues 75–77 (VES) and 94–95 (HE) contribute to the substrate site.

The protein belongs to the GTP cyclohydrolase I family. QueF type 1 subfamily.

The protein resides in the cytoplasm. The enzyme catalyses 7-aminomethyl-7-carbaguanine + 2 NADP(+) = 7-cyano-7-deazaguanine + 2 NADPH + 3 H(+). The protein operates within tRNA modification; tRNA-queuosine biosynthesis. Catalyzes the NADPH-dependent reduction of 7-cyano-7-deazaguanine (preQ0) to 7-aminomethyl-7-deazaguanine (preQ1). In Exiguobacterium sibiricum (strain DSM 17290 / CCUG 55495 / CIP 109462 / JCM 13490 / 255-15), this protein is NADPH-dependent 7-cyano-7-deazaguanine reductase.